Here is a 506-residue protein sequence, read N- to C-terminus: Trans-cinnamate 4-monooxygenase (506 aa).

The chain crosses the membrane as a helical span at residues 3–23; the sequence is DFVLLEKALLGLFIATIVAIT. (E)-cinnamate contacts are provided by residues 214 to 219 and Ala307; that span reads RSRLAQ. Cys448 is a binding site for heme.

The protein belongs to the cytochrome P450 family. Heme is required as a cofactor.

It is found in the membrane. The catalysed reaction is (E)-cinnamate + reduced [NADPH--hemoprotein reductase] + O2 = (E)-4-coumarate + oxidized [NADPH--hemoprotein reductase] + H2O + H(+). It participates in phenylpropanoid metabolism; trans-4-coumarate biosynthesis; trans-4-coumarate from trans-cinnamate: step 1/1. Catalyzes the first oxidative step of the phenylpropanoid pathway in higher plants by transforming trans-cinnamate into p-coumarate. The compounds formed by this pathway are essential components for lignification, pollination, and defense against ultraviolet light, predators and pathogens. The polypeptide is Trans-cinnamate 4-monooxygenase (CYP73A10) (Petroselinum crispum (Parsley)).